The following is a 331-amino-acid chain: NADH-quinone oxidoreductase subunit H (331 aa).

The next 9 helical transmembrane spans lie at 5 to 25 (LFFVITTIVKAVVILAVMASL), 45 to 65 (GPDMVGPAGVLQIVADMIKLF), 78 to 98 (FIFLIAPLISAIAAFAALAPV), 122 to 142 (VLYIAGVAAVCVFSPLAAGLA), 156 to 176 (VVALLSFEVVAGMALLSVVMV), 192 to 212 (IFNWLIFKQPLAFVLFVMASF), 245 to 265 (FFIGEYTNMIAASIIITLLFL), 271 to 291 (FLFIPGALMIILKSSLVFFFF), and 311 to 331 (WKILLPLGILNVVITGFALLI).

It belongs to the complex I subunit 1 family. In terms of assembly, NDH-1 is composed of 14 different subunits. Subunits NuoA, H, J, K, L, M, N constitute the membrane sector of the complex.

It localises to the cell inner membrane. It catalyses the reaction a quinone + NADH + 5 H(+)(in) = a quinol + NAD(+) + 4 H(+)(out). Its function is as follows. NDH-1 shuttles electrons from NADH, via FMN and iron-sulfur (Fe-S) centers, to quinones in the respiratory chain. The immediate electron acceptor for the enzyme in this species is believed to be ubiquinone. Couples the redox reaction to proton translocation (for every two electrons transferred, four hydrogen ions are translocated across the cytoplasmic membrane), and thus conserves the redox energy in a proton gradient. This subunit may bind ubiquinone. In Campylobacter concisus (strain 13826), this protein is NADH-quinone oxidoreductase subunit H.